The following is a 160-amino-acid chain: D-aminoacyl-tRNA deacylase (160 aa).

The short motif at 137–138 (GP) is the Gly-cisPro motif, important for rejection of L-amino acids element.

This sequence belongs to the DTD family. In terms of assembly, homodimer.

It localises to the cytoplasm. The catalysed reaction is glycyl-tRNA(Ala) + H2O = tRNA(Ala) + glycine + H(+). The enzyme catalyses a D-aminoacyl-tRNA + H2O = a tRNA + a D-alpha-amino acid + H(+). In terms of biological role, an aminoacyl-tRNA editing enzyme that deacylates mischarged D-aminoacyl-tRNAs. Also deacylates mischarged glycyl-tRNA(Ala), protecting cells against glycine mischarging by AlaRS. Acts via tRNA-based rather than protein-based catalysis; rejects L-amino acids rather than detecting D-amino acids in the active site. By recycling D-aminoacyl-tRNA to D-amino acids and free tRNA molecules, this enzyme counteracts the toxicity associated with the formation of D-aminoacyl-tRNA entities in vivo and helps enforce protein L-homochirality. This chain is D-aminoacyl-tRNA deacylase, found in Chloroflexus aurantiacus (strain ATCC 29364 / DSM 637 / Y-400-fl).